A 171-amino-acid chain; its full sequence is Minor capsid protein 3 (171 aa).

In terms of assembly, interacts with the major capsid protein.

It localises to the virion. Functionally, one of the minor capsid proteins that constitute a network internal to the major capsid proteins and outside the lipid membrane. The minor capsid proteins glue and stabilize the capsomers. This Chlorella (PBCV-1) protein is Minor capsid protein 3.